Here is a 382-residue protein sequence, read N- to C-terminus: Anhydro-N-acetylmuramic acid kinase (382 aa).

Residue 9 to 16 participates in ATP binding; that stretch reads GTSLDGID.

The protein belongs to the anhydro-N-acetylmuramic acid kinase family.

It carries out the reaction 1,6-anhydro-N-acetyl-beta-muramate + ATP + H2O = N-acetyl-D-muramate 6-phosphate + ADP + H(+). Its pathway is amino-sugar metabolism; 1,6-anhydro-N-acetylmuramate degradation. It participates in cell wall biogenesis; peptidoglycan recycling. Its function is as follows. Catalyzes the specific phosphorylation of 1,6-anhydro-N-acetylmuramic acid (anhMurNAc) with the simultaneous cleavage of the 1,6-anhydro ring, generating MurNAc-6-P. Is required for the utilization of anhMurNAc either imported from the medium or derived from its own cell wall murein, and thus plays a role in cell wall recycling. The sequence is that of Anhydro-N-acetylmuramic acid kinase from Bacillus cereus (strain AH187).